The chain runs to 366 residues: Homeobox-leucine zipper protein HOX21 (366 aa).

Disordered regions lie at residues 25-81 (QQAA…SSAQ) and 94-132 (MLGK…EKKR). Positions 36 to 48 (HHHHHHHGHHGHH) are enriched in basic residues. The span at 62-74 (GPPPPPPPHPHNP) shows a compositional bias: pro residues. Residues 103-115 (GDGGGGGDEVNGG) show a composition bias toward gly residues. Residues 127-186 (AGEKKRRLNVEQVRTLEKNFELGNKLEPERKMQLARALGLQPRQVAIWFQNRRARWKTKQ) constitute a DNA-binding region (homeobox). The leucine-zipper stretch occupies residues 185–229 (KQLEKDYDALKRQLDAVKAENDALLNHNKKLQAEIVALKGREAAS). Disordered regions lie at residues 239–287 (EASC…GGGG) and 312–336 (LHSS…VQAA). Positions 240-252 (ASCSNRSENSSEI) are enriched in polar residues.

The protein belongs to the HD-ZIP homeobox family. Class I subfamily. In terms of tissue distribution, expressed in seedlings, roots, stems, leaf blades and panicles.

Its subcellular location is the nucleus. Probable transcription factor. This Oryza sativa subsp. japonica (Rice) protein is Homeobox-leucine zipper protein HOX21 (HOX21).